A 192-amino-acid chain; its full sequence is dTTP/UTP pyrophosphatase (192 aa).

Aspartate 75 serves as the catalytic Proton acceptor.

The protein belongs to the Maf family. YhdE subfamily. Requires a divalent metal cation as cofactor.

It is found in the cytoplasm. It carries out the reaction dTTP + H2O = dTMP + diphosphate + H(+). The enzyme catalyses UTP + H2O = UMP + diphosphate + H(+). Its function is as follows. Nucleoside triphosphate pyrophosphatase that hydrolyzes dTTP and UTP. May have a dual role in cell division arrest and in preventing the incorporation of modified nucleotides into cellular nucleic acids. This is dTTP/UTP pyrophosphatase from Bdellovibrio bacteriovorus (strain ATCC 15356 / DSM 50701 / NCIMB 9529 / HD100).